Reading from the N-terminus, the 388-residue chain is Mitochondrial distribution and morphology protein 12 (388 aa).

The region spanning 1–388 (MSLDINWSLL…VFPNFHTVAL (388 aa)) is the SMP-LTD domain. 2 disordered regions span residues 75–101 (DDEGDFAEEEKQREKEREERDKLRNEA) and 209–251 (PMSI…SSSS). A compositionally biased stretch (basic and acidic residues) spans 83–101 (EEKQREKEREERDKLRNEA). Residues 234–243 (PSPPAHPAGL) show a composition bias toward pro residues.

This sequence belongs to the MDM12 family. Component of the ER-mitochondria encounter structure (ERMES) or MDM complex, composed of MMM1, MDM10, MDM12 and MDM34. An MMM1 homodimer associates with one molecule of MDM12 on each side in a pairwise head-to-tail manner, and the SMP-LTD domains of MMM1 and MDM12 generate a continuous hydrophobic tunnel for phospholipid trafficking.

It localises to the mitochondrion outer membrane. Its subcellular location is the endoplasmic reticulum membrane. In terms of biological role, component of the ERMES/MDM complex, which serves as a molecular tether to connect the endoplasmic reticulum (ER) and mitochondria. Components of this complex are involved in the control of mitochondrial shape and protein biogenesis, and function in nonvesicular lipid trafficking between the ER and mitochondria. MDM12 is required for the interaction of the ER-resident membrane protein MMM1 and the outer mitochondrial membrane-resident beta-barrel protein MDM10. The MDM12-MMM1 subcomplex functions in the major beta-barrel assembly pathway that is responsible for biogenesis of all mitochondrial outer membrane beta-barrel proteins, and acts in a late step after the SAM complex. The MDM10-MDM12-MMM1 subcomplex further acts in the TOM40-specific pathway after the action of the MDM12-MMM1 complex. Essential for establishing and maintaining the structure of mitochondria and maintenance of mtDNA nucleoids. The protein is Mitochondrial distribution and morphology protein 12 of Cryptococcus neoformans var. neoformans serotype D (strain B-3501A) (Filobasidiella neoformans).